The following is a 107-amino-acid chain: uncharacterized protein (107 aa).

Residues 37 to 59 (MVFSFLTVMPGDFIKCLFLRFFV) form a helical membrane-spanning segment.

Its subcellular location is the membrane. This is an uncharacterized protein from Saccharomyces cerevisiae (strain ATCC 204508 / S288c) (Baker's yeast).